Consider the following 585-residue polypeptide: Bifunctional purine biosynthesis protein ade10 (585 aa).

Residues 1 to 142 (MYALLSVYDK…KNHARVTILS (142 aa)) form the MGS-like domain. IMP-binding positions include 30-33 (SGGT), 60-63 (RVKT), 97-98 (CN), and 121-122 (DI). Lys-133 serves as the catalytic Proton donor/acceptor; for FAICAR cyclization activity. Residues 200 to 201 (RY), His-260, Gly-308, Asp-331, Asn-423, and Arg-443 each bind 5-amino-1-(5-phospho-beta-D-ribosyl)imidazole-4-carboxamide. The active-site Proton acceptor; for AICAR formyltransferase activity is the His-260. Position 444 (Ile-444) interacts with (6R)-10-formyltetrahydrofolate. Phe-534 contacts 5-amino-1-(5-phospho-beta-D-ribosyl)imidazole-4-carboxamide. Residues Asp-539 and 558–559 (SV) each bind (6R)-10-formyltetrahydrofolate. Arg-581 contributes to the 5-amino-1-(5-phospho-beta-D-ribosyl)imidazole-4-carboxamide binding site.

This sequence belongs to the PurH family. Homodimer.

The protein resides in the cytoplasm. It is found in the cytosol. The enzyme catalyses (6R)-10-formyltetrahydrofolate + 5-amino-1-(5-phospho-beta-D-ribosyl)imidazole-4-carboxamide = 5-formamido-1-(5-phospho-D-ribosyl)imidazole-4-carboxamide + (6S)-5,6,7,8-tetrahydrofolate. The catalysed reaction is IMP + H2O = 5-formamido-1-(5-phospho-D-ribosyl)imidazole-4-carboxamide. The protein operates within purine metabolism; IMP biosynthesis via de novo pathway; 5-formamido-1-(5-phospho-D-ribosyl)imidazole-4-carboxamide from 5-amino-1-(5-phospho-D-ribosyl)imidazole-4-carboxamide (10-formyl THF route): step 1/1. It participates in purine metabolism; IMP biosynthesis via de novo pathway; IMP from 5-formamido-1-(5-phospho-D-ribosyl)imidazole-4-carboxamide: step 1/1. Its function is as follows. Bifunctional enzyme that catalyzes the last two steps of purine biosynthesis. Acts as a transformylase that incorporates a formyl group to the AMP analog AICAR (5-amino-1-(5-phospho-beta-D-ribosyl)imidazole-4-carboxamide) to produce the intermediate formyl-AICAR (FAICAR). Also catalyzes the cyclization of FAICAR to IMP. This chain is Bifunctional purine biosynthesis protein ade10 (ade10), found in Schizosaccharomyces pombe (strain 972 / ATCC 24843) (Fission yeast).